We begin with the raw amino-acid sequence, 413 residues long: Serine hydroxymethyltransferase (413 aa).

(6S)-5,6,7,8-tetrahydrofolate is bound by residues Leu-118 and 122 to 124 (GHL). The residue at position 228 (Lys-228) is an N6-(pyridoxal phosphate)lysine.

Belongs to the SHMT family. In terms of assembly, homodimer. Pyridoxal 5'-phosphate serves as cofactor.

It is found in the cytoplasm. It carries out the reaction (6R)-5,10-methylene-5,6,7,8-tetrahydrofolate + glycine + H2O = (6S)-5,6,7,8-tetrahydrofolate + L-serine. The protein operates within one-carbon metabolism; tetrahydrofolate interconversion. It functions in the pathway amino-acid biosynthesis; glycine biosynthesis; glycine from L-serine: step 1/1. Functionally, catalyzes the reversible interconversion of serine and glycine with tetrahydrofolate (THF) serving as the one-carbon carrier. This reaction serves as the major source of one-carbon groups required for the biosynthesis of purines, thymidylate, methionine, and other important biomolecules. Also exhibits THF-independent aldolase activity toward beta-hydroxyamino acids, producing glycine and aldehydes, via a retro-aldol mechanism. This is Serine hydroxymethyltransferase from Phytoplasma australiense.